Here is a 1142-residue protein sequence, read N- to C-terminus: DNA-directed RNA polymerase subunit beta N-terminal section (1142 aa).

It belongs to the RNA polymerase beta chain family. In plastids the minimal PEP RNA polymerase catalytic core is composed of four subunits: alpha, beta, beta', and beta''. When a (nuclear-encoded) sigma factor is associated with the core the holoenzyme is formed, which can initiate transcription.

The protein localises to the plastid. Its subcellular location is the chloroplast. It carries out the reaction RNA(n) + a ribonucleoside 5'-triphosphate = RNA(n+1) + diphosphate. Functionally, DNA-dependent RNA polymerase catalyzes the transcription of DNA into RNA using the four ribonucleoside triphosphates as substrates. The protein is DNA-directed RNA polymerase subunit beta N-terminal section (rpoB1) of Pleurastrum terricola (Filamentous green alga).